The sequence spans 105 residues: Small ribosomal subunit protein uS10c (105 aa).

Belongs to the universal ribosomal protein uS10 family. Part of the 30S ribosomal subunit.

It localises to the plastid. The protein localises to the cyanelle. Functionally, involved in the binding of tRNA to the ribosomes. In Cyanophora paradoxa, this protein is Small ribosomal subunit protein uS10c (rps10).